A 439-amino-acid chain; its full sequence is MQVKENKQLCLISLGCSKNLVDSEVMLGKLYNYTLTNDAKKADVILINTCGFIESAKQESIQTILNAAKDKKEGAILIASGCLSERYKDEIKELIPEVDIFTGVGDYDKIDILIAKKQNQFSEQVFLSEHYNARIITGSSVHAYVKISEGCNQKCSFCAIPSFKGKLQSRELDSILKEVEDLALKGYKDMTFIAQDSSSFLYDKGQKDGLIQLIRAIDKQQALKSARILYLYPSSTTLELIGAIEDSPIFQNYFDMPIQHISDSMLKKMRRNSSQAHHLKLLNAMKQVKESFIRSTIIVGHPEENESEFEELSAFLDEFRFDRLNIFAFSAEENTHAYSLEKVPKKIINARIKALNKIALKHQNHSFKALLNKPIKALVEHKEGEYFYKARDLRWAPEVDGEILINDSELTTPLKPGHYTIVPSAFKDNILLAKVLSPF.

In terms of domain architecture, MTTase N-terminal spans 7–119 (KQLCLISLGC…IDILIAKKQN (113 aa)). 6 residues coordinate [4Fe-4S] cluster: Cys-16, Cys-50, Cys-82, Cys-151, Cys-155, and Cys-158. Residues 137–368 (TGSSVHAYVK…ALKHQNHSFK (232 aa)) form the Radical SAM core domain.

The protein belongs to the methylthiotransferase family. RimO subfamily. The cofactor is [4Fe-4S] cluster.

The protein resides in the cytoplasm. The catalysed reaction is L-aspartate(89)-[ribosomal protein uS12]-hydrogen + (sulfur carrier)-SH + AH2 + 2 S-adenosyl-L-methionine = 3-methylsulfanyl-L-aspartate(89)-[ribosomal protein uS12]-hydrogen + (sulfur carrier)-H + 5'-deoxyadenosine + L-methionine + A + S-adenosyl-L-homocysteine + 2 H(+). Catalyzes the methylthiolation of an aspartic acid residue of ribosomal protein uS12. The polypeptide is Ribosomal protein uS12 methylthiotransferase RimO (Helicobacter pylori (strain J99 / ATCC 700824) (Campylobacter pylori J99)).